Here is a 238-residue protein sequence, read N- to C-terminus: Large ribosomal subunit protein uL2 (238 aa).

The tract at residues Gly-203–Gly-223 is disordered.

This sequence belongs to the universal ribosomal protein uL2 family. Part of the 50S ribosomal subunit. Forms a bridge to the 30S subunit in the 70S ribosome.

One of the primary rRNA binding proteins. Required for association of the 30S and 50S subunits to form the 70S ribosome, for tRNA binding and peptide bond formation. It has been suggested to have peptidyltransferase activity; this is somewhat controversial. Makes several contacts with the 16S rRNA in the 70S ribosome. The chain is Large ribosomal subunit protein uL2 from Methanosarcina barkeri (strain Fusaro / DSM 804).